Here is a 649-residue protein sequence, read N- to C-terminus: Protein WHI4 (649 aa).

Phosphoserine occurs at positions 22 and 206. 2 disordered regions span residues 196–217 (EHVS…SSAQ) and 228–247 (ISYG…KPRP). Positions 228-238 (ISYGKTSSSPL) are enriched in polar residues. 2 positions are modified to phosphoserine: Ser258 and Ser283. Disordered regions lie at residues 438 to 461 (LDLN…SIFN) and 604 to 649 (QLPH…YGKS). In terms of domain architecture, RRM spans 533–625 (NTLYVGNLPP…GGIRLSFSKN (93 aa)). Residues 631–649 (GSNSRSKSGYSFNGSYGKS) show a composition bias toward polar residues.

Post-translationally, phosphorylated by PKA in vitro.

The protein localises to the cytoplasm. Its function is as follows. Has a partially redundant function to WHI3, a dosage-dependent modulator of cell size. The chain is Protein WHI4 (WHI4) from Saccharomyces cerevisiae (strain ATCC 204508 / S288c) (Baker's yeast).